A 428-amino-acid polypeptide reads, in one-letter code: 3-phosphoshikimate 1-carboxyvinyltransferase (428 aa).

3-phosphoshikimate contacts are provided by Lys-19, Ser-20, and Arg-24. Lys-19 contacts phosphoenolpyruvate. The phosphoenolpyruvate site is built by Gly-91 and Arg-119. Ser-164, Gln-166, Asp-312, and Lys-339 together coordinate 3-phosphoshikimate. A phosphoenolpyruvate-binding site is contributed by Gln-166. The active-site Proton acceptor is the Asp-312. Positions 343 and 386 each coordinate phosphoenolpyruvate.

This sequence belongs to the EPSP synthase family. As to quaternary structure, monomer.

It localises to the cytoplasm. The enzyme catalyses 3-phosphoshikimate + phosphoenolpyruvate = 5-O-(1-carboxyvinyl)-3-phosphoshikimate + phosphate. It participates in metabolic intermediate biosynthesis; chorismate biosynthesis; chorismate from D-erythrose 4-phosphate and phosphoenolpyruvate: step 6/7. Catalyzes the transfer of the enolpyruvyl moiety of phosphoenolpyruvate (PEP) to the 5-hydroxyl of shikimate-3-phosphate (S3P) to produce enolpyruvyl shikimate-3-phosphate and inorganic phosphate. The protein is 3-phosphoshikimate 1-carboxyvinyltransferase of Bacillus subtilis (strain 168).